Reading from the N-terminus, the 307-residue chain is Putative S-adenosyl-L-methionine-dependent methyltransferase Mflv_5023 (307 aa).

S-adenosyl-L-methionine is bound by residues Asp-133 and 162–163 (DL). The interval 213-234 (SRLAVESVPSQQSADQDEMREK) is disordered.

It belongs to the UPF0677 family.

Exhibits S-adenosyl-L-methionine-dependent methyltransferase activity. The sequence is that of Putative S-adenosyl-L-methionine-dependent methyltransferase Mflv_5023 from Mycolicibacterium gilvum (strain PYR-GCK) (Mycobacterium gilvum (strain PYR-GCK)).